Reading from the N-terminus, the 447-residue chain is Serine/threonine-protein phosphatase 2A 55 kDa regulatory subunit B gamma isoform (447 aa).

WD repeat units follow at residues 22 to 61 (TEAD…KNAP), 87 to 128 (EIEE…KRPE), 171 to 209 (GHTY…RSFN), 220 to 260 (DLTE…LCDK), 279 to 317 (EIIS…RPIE), 334 to 375 (ENDC…DVTL), and 410 to 446 (DFTK…NSDV).

It belongs to the phosphatase 2A regulatory subunit B family. In terms of assembly, PP2A consists of a common heterodimeric core enzyme, composed of a 36 kDa catalytic subunit (subunit C) and a 65 kDa constant regulatory subunit (PR65 or subunit A), that associates with a variety of regulatory subunits. Proteins that associate with the core dimer include three families of regulatory subunits B (the R2/B/PR55/B55, R3/B''/PR72/PR130/PR59 and R5/B'/B56 families), the 48 kDa variable regulatory subunit, viral proteins, and cell signaling molecules. Interacts with IER5. As to expression, highly expressed in brain.

In terms of biological role, the B regulatory subunit might modulate substrate selectivity and catalytic activity, and might also direct the localization of the catalytic enzyme to a particular subcellular compartment. The sequence is that of Serine/threonine-protein phosphatase 2A 55 kDa regulatory subunit B gamma isoform (PPP2R2C) from Oryctolagus cuniculus (Rabbit).